Reading from the N-terminus, the 338-residue chain is MQTTVEPIRGTNDPVQSLELSLVVPIFNEEQSVGPLVERVAAAMVSYPHRWELILVDDGSTDATLVNARKYVGREGLALRIVELQRNFGQTAAMQAGIDTARGRLIATMDGDLQNDPKDIPSMVSELERRELDLLVGWRKNRKDGLFLRKIPSWCANYLIGRITGVKLHDYGCSLKIYRASIIKQVKLMGEMHRFIPAWVAGVVPSSRIGEMAVTHHAREHGVSKYGISRTFRVILDLLSVMFFMRYKARPGHFFGSLGLGLGALAMLILLYLGFDKFILGNDIGTRPMLMVGVVLLLSSVQMITTGILAEMIARTYYRDDASPNYIVRQIFDDQSQA.

Helical transmembrane passes span 254-274 (FFGSLGLGLGALAMLILLYLG) and 289-309 (MLMVGVVLLLSSVQMITTGIL).

Belongs to the glycosyltransferase 2 family.

Its subcellular location is the cell membrane. It catalyses the reaction di-trans,nona-cis-dodecaprenyl phosphate + UDP-alpha-D-galacturonate = beta-D-galacturonosyl di-trans,nona-cis-dodecaprenyl phosphate + UDP. In terms of biological role, glycosyltransferase that catalyzes the synthesis of dodecaprenyl-phosphate galacturonate (Dod-P-GalA), likely from UDP-GalA and dodecaprenyl-phosphate. Dod-P-GalA is the lipid donor required for GalA transfer to lipopolysaccharide (LPS) specific residues catalyzed by the GalA transferases RgtA, RgtB, RgtC and RgtD. This is Dodecaprenyl-phosphate galacturonate synthase from Rhizobium johnstonii (strain DSM 114642 / LMG 32736 / 3841) (Rhizobium leguminosarum bv. viciae).